Consider the following 310-residue polypeptide: Acetylglutamate kinase (310 aa).

Residues 83-84 (GG), R105, and N207 each bind substrate.

It belongs to the acetylglutamate kinase family. ArgB subfamily.

Its subcellular location is the cytoplasm. It catalyses the reaction N-acetyl-L-glutamate + ATP = N-acetyl-L-glutamyl 5-phosphate + ADP. It functions in the pathway amino-acid biosynthesis; L-arginine biosynthesis; N(2)-acetyl-L-ornithine from L-glutamate: step 2/4. Functionally, catalyzes the ATP-dependent phosphorylation of N-acetyl-L-glutamate. The polypeptide is Acetylglutamate kinase (Ralstonia nicotianae (strain ATCC BAA-1114 / GMI1000) (Ralstonia solanacearum)).